Consider the following 348-residue polypeptide: Fructose-1,6-bisphosphatase class 1 (348 aa).

The Mg(2+) site is built by Glu107, Asp129, Ile131, and Asp132. Residues 132–135 (DGSS), Asn224, Tyr252, and Lys282 contribute to the substrate site. Position 288 (Glu288) interacts with Mg(2+).

Belongs to the FBPase class 1 family. In terms of assembly, homotetramer. The cofactor is Mg(2+).

The protein resides in the cytoplasm. It catalyses the reaction beta-D-fructose 1,6-bisphosphate + H2O = beta-D-fructose 6-phosphate + phosphate. It functions in the pathway carbohydrate biosynthesis; Calvin cycle. This chain is Fructose-1,6-bisphosphatase class 1, found in Microcystis aeruginosa (strain NIES-843 / IAM M-2473).